A 171-amino-acid chain; its full sequence is Ly6/PLAUR domain-containing protein 6 (171 aa).

Positions 1-25 are cleaved as a signal peptide; sequence MEPSPALAWLLLLSLVADCLKAAQS. The region spanning 47–141 is the UPAR/Ly6 domain; the sequence is FKCFTCEKAA…PRNETDATFA (95 aa). 6 cysteine pairs are disulfide-bonded: C49–C77, C52–C61, C70–C96, C102–C121, C107–C118, and C122–C127. The short motif at 88-90 is the NxI motif element; sequence NSI. 2 N-linked (GlcNAc...) asparagine glycosylation sites follow: N134 and N147. The GPI-anchor amidated asparagine moiety is linked to residue N147. Residues 148–171 constitute a propeptide, removed in mature form; it reads QTNGHPHCVSVIVSCLWVWLGLTL.

In terms of assembly, interacts with nicotinic acetylcholine receptors (nAChRs) including CHRNA3, CHRNA4, CHRNA5, CHRNA6, CHRNA7, CHRNB2 and CHRNB4. Interacts (via NxI motif) with LRP6. In terms of tissue distribution, detected in the frontal cortex and hippocampus (at protein level). Highly expressed in the brain and spinal cord, as well as dorsal root and trigeminal ganglia.

The protein resides in the secreted. Its subcellular location is the cytoplasm. The protein localises to the cell membrane. It localises to the synapse. It is found in the synaptosome. The protein resides in the membrane raft. Its subcellular location is the cell projection. The protein localises to the dendrite. It localises to the perikaryon. Its function is as follows. Acts as a modulator of nicotinic acetylcholine receptors (nAChRs) function in the brain. Inhibits nicotine-induced Ca(2+) influx through nAChRs. In vitro, specifically inhibits alpha-3:beta-4 and alpha-7 nAChR currents in an allosteric manner. Acts as a positive regulator of Wnt/beta-catenin signaling. The chain is Ly6/PLAUR domain-containing protein 6 (Lypd6) from Mus musculus (Mouse).